The following is a 102-amino-acid chain: Large ribosomal subunit protein uL24 (102 aa).

Belongs to the universal ribosomal protein uL24 family. As to quaternary structure, part of the 50S ribosomal subunit.

Functionally, one of two assembly initiator proteins, it binds directly to the 5'-end of the 23S rRNA, where it nucleates assembly of the 50S subunit. Its function is as follows. One of the proteins that surrounds the polypeptide exit tunnel on the outside of the subunit. The polypeptide is Large ribosomal subunit protein uL24 (Cupriavidus pinatubonensis (strain JMP 134 / LMG 1197) (Cupriavidus necator (strain JMP 134))).